Consider the following 329-residue polypeptide: Thioredoxin domain-containing protein 6 (329 aa).

Positions 11 to 115 (QVNINTQELW…QKTILQQLEA (105 aa)) constitute a Thioredoxin domain. Residues 157-303 (GKTCTLGIIK…LFPSFKFSDK (147 aa)) form an NDK region. Positions 303 to 329 (KDKEAPPGAEAQTMVGPVEDPCMSERI) are disordered.

It belongs to the NDK family. As to quaternary structure, monomer and homodimer. Expressed in lung airway epithelium (at protein level).

It is found in the cytoplasm. The protein resides in the cytoskeleton. It localises to the cilium axoneme. Its subcellular location is the dynein axonemal particle. May be a regulator of microtubule physiology. This is Thioredoxin domain-containing protein 6 from Mus musculus (Mouse).